The chain runs to 186 residues: Elongation factor P (186 aa).

This sequence belongs to the elongation factor P family.

The protein resides in the cytoplasm. Its pathway is protein biosynthesis; polypeptide chain elongation. Its function is as follows. Involved in peptide bond synthesis. Stimulates efficient translation and peptide-bond synthesis on native or reconstituted 70S ribosomes in vitro. Probably functions indirectly by altering the affinity of the ribosome for aminoacyl-tRNA, thus increasing their reactivity as acceptors for peptidyl transferase. This Shewanella loihica (strain ATCC BAA-1088 / PV-4) protein is Elongation factor P.